Reading from the N-terminus, the 353-residue chain is F-box protein At2g14290 (353 aa).

The F-box domain maps to 6–58 (PRTWSELPPDLLGSIFHRLSFTDFHRAKIVCWNWNLSSKLTVPKKIRSPWLML).

This chain is F-box protein At2g14290, found in Arabidopsis thaliana (Mouse-ear cress).